Consider the following 167-residue polypeptide: Inclusion membrane protein G (167 aa).

2 helical membrane passes run 37 to 57 and 63 to 83; these read LSLF…AVLF and VLPY…AVIV. 2 disordered regions span residues 97-136 and 148-167; these read KRSP…STFG and VSGA…SHSF. Low complexity predominate over residues 122-134; that stretch reads ESASPQASPTSST. The short motif at 161–166 is the Phosphorylation-dependent binding motif element; sequence RSRSHS. Ser-166 is subject to Phosphoserine.

Phosphorylated by chlamydial kinase Pnk1.

The protein localises to the secreted. It localises to the host vacuole. Its subcellular location is the host pathogen-containing vacuole. The protein resides in the host pathogen-containing vacuole membrane. Its function is as follows. Inclusion membrane protein probably involved in early modification events of the chlamydial inclusion. Binds to the host cell 14-3-3 beta (YWHAB); phosphorylation of Ser-166 is probably required. The chain is Inclusion membrane protein G (incG) from Chlamydia trachomatis serovar D (strain ATCC VR-885 / DSM 19411 / UW-3/Cx).